The chain runs to 422 residues: 3-phosphoshikimate 1-carboxyvinyltransferase (422 aa).

3-phosphoshikimate contacts are provided by Lys20, Ser21, and Arg25. A phosphoenolpyruvate-binding site is contributed by Lys20. Gly92 and Arg120 together coordinate phosphoenolpyruvate. Residues Ser163, Ser164, Gln165, Ser191, Asp304, and Lys331 each coordinate 3-phosphoshikimate. Gln165 is a phosphoenolpyruvate binding site. Catalysis depends on Asp304, which acts as the Proton acceptor. Phosphoenolpyruvate contacts are provided by Arg335 and Arg377.

The protein belongs to the EPSP synthase family. In terms of assembly, monomer.

Its subcellular location is the cytoplasm. It catalyses the reaction 3-phosphoshikimate + phosphoenolpyruvate = 5-O-(1-carboxyvinyl)-3-phosphoshikimate + phosphate. Its pathway is metabolic intermediate biosynthesis; chorismate biosynthesis. In terms of biological role, catalyzes the transfer of the enolpyruvyl moiety of phosphoenolpyruvate (PEP) to the 5-hydroxyl of shikimate-3-phosphate (S3P) to produce enolpyruvyl shikimate-3-phosphate and inorganic phosphate. The sequence is that of 3-phosphoshikimate 1-carboxyvinyltransferase from Methanocorpusculum labreanum (strain ATCC 43576 / DSM 4855 / Z).